A 187-amino-acid chain; its full sequence is Choriogonadotropin subunit beta variant 1 (187 aa).

An N-terminal signal peptide occupies residues 1 to 50; that stretch reads MSTFPVLAEDIPLRERHVKGRVDPHFRAPKMEMFQRLLLLLLLSMGGTWA. 6 cysteine pairs are disulfide-bonded: C59–C107, C73–C122, C76–C160, C84–C138, C88–C140, and C143–C150. N-linked (GlcNAc...) asparagine glycans are attached at residues N63 and N80. Positions 161–187 are disordered; that stretch reads DDPRFQDSSSSKAPPPSLPSPSRLPGP. The span at 173–187 shows a compositional bias: pro residues; that stretch reads APPPSLPSPSRLPGP.

This sequence belongs to the glycoprotein hormones subunit beta family. As to expression, expressed in placenta, testis and pituitary.

It localises to the secreted. In Homo sapiens (Human), this protein is Choriogonadotropin subunit beta variant 1 (CGB1).